We begin with the raw amino-acid sequence, 314 residues long: tRNA dimethylallyltransferase (314 aa).

13 to 20 (GPTAVGKT) is an ATP binding site. 15–20 (TAVGKT) contributes to the substrate binding site. The segment at 38-41 (DSMQ) is interaction with substrate tRNA.

This sequence belongs to the IPP transferase family. In terms of assembly, monomer. The cofactor is Mg(2+).

The enzyme catalyses adenosine(37) in tRNA + dimethylallyl diphosphate = N(6)-dimethylallyladenosine(37) in tRNA + diphosphate. Its function is as follows. Catalyzes the transfer of a dimethylallyl group onto the adenine at position 37 in tRNAs that read codons beginning with uridine, leading to the formation of N6-(dimethylallyl)adenosine (i(6)A). This Bacillus velezensis (strain DSM 23117 / BGSC 10A6 / LMG 26770 / FZB42) (Bacillus amyloliquefaciens subsp. plantarum) protein is tRNA dimethylallyltransferase.